Consider the following 259-residue polypeptide: Imidazole glycerol phosphate synthase subunit HisF (259 aa).

Active-site residues include Asp-11 and Asp-130.

It belongs to the HisA/HisF family. In terms of assembly, heterodimer of HisH and HisF.

The protein localises to the cytoplasm. The enzyme catalyses 5-[(5-phospho-1-deoxy-D-ribulos-1-ylimino)methylamino]-1-(5-phospho-beta-D-ribosyl)imidazole-4-carboxamide + L-glutamine = D-erythro-1-(imidazol-4-yl)glycerol 3-phosphate + 5-amino-1-(5-phospho-beta-D-ribosyl)imidazole-4-carboxamide + L-glutamate + H(+). It participates in amino-acid biosynthesis; L-histidine biosynthesis; L-histidine from 5-phospho-alpha-D-ribose 1-diphosphate: step 5/9. In terms of biological role, IGPS catalyzes the conversion of PRFAR and glutamine to IGP, AICAR and glutamate. The HisF subunit catalyzes the cyclization activity that produces IGP and AICAR from PRFAR using the ammonia provided by the HisH subunit. The protein is Imidazole glycerol phosphate synthase subunit HisF of Variovorax paradoxus (strain S110).